The primary structure comprises 135 residues: Large-conductance mechanosensitive channel (135 aa).

The next 2 helical transmembrane spans lie at 10–30 and 76–96; these read FAMK…AAFG and GAFI…FCAI.

It belongs to the MscL family. As to quaternary structure, homopentamer.

It is found in the cell inner membrane. Functionally, channel that opens in response to stretch forces in the membrane lipid bilayer. May participate in the regulation of osmotic pressure changes within the cell. This Proteus mirabilis (strain HI4320) protein is Large-conductance mechanosensitive channel.